Reading from the N-terminus, the 305-residue chain is Transcription factor bHLH18 (305 aa).

A disordered region spans residues 41–67 (LKTTHISPNLHPFSSSNPPPPKHQPSS). Residues 44–56 (THISPNLHPFSSS) show a composition bias toward polar residues. A bHLH domain is found at 122 to 171 (SNAQDHILAERKRREKLTQRFVALSALIPGLKKMDKASVLGDAIKHIKYL). The disordered stretch occupies residues 201 to 224 (DENHQPSSSSSSDGNRNSSSSNLP). The segment covering 207–222 (SSSSSSDGNRNSSSSN) has biased composition (low complexity).

Homodimer. Expressed in roots.

The protein localises to the nucleus. This Arabidopsis thaliana (Mouse-ear cress) protein is Transcription factor bHLH18 (BHLH18).